The chain runs to 37 residues: Large ribosomal subunit protein bL36 (37 aa).

It belongs to the bacterial ribosomal protein bL36 family.

In Caldicellulosiruptor saccharolyticus (strain ATCC 43494 / DSM 8903 / Tp8T 6331), this protein is Large ribosomal subunit protein bL36.